The sequence spans 265 residues: Exosome complex component RRP42 (265 aa).

This sequence belongs to the RNase PH family. In terms of assembly, component of the RNA exosome complex. Specifically part of the catalytically inactive RNA exosome core complex (Exo-9) which may associate with the catalytic subunits RRP6 and DIS3 in cytoplasmic- and nuclear-specific RNA exosome complex forms. Exo-9 is formed by a hexameric base ring of RNase PH domain-containing subunits and a cap ring consisting of CSL4, RRP4 and RRP40.

It localises to the cytoplasm. It is found in the nucleus. The protein resides in the nucleolus. In terms of biological role, non-catalytic component of the RNA exosome complex which has 3'-&gt;5' exoribonuclease activity and participates in a multitude of cellular RNA processing and degradation events. In the nucleus, the RNA exosome complex is involved in proper maturation of stable RNA species such as rRNA, snRNA and snoRNA, in the elimination of RNA processing by-products and non-coding 'pervasive' transcripts, such as antisense RNA species and cryptic unstable transcripts (CUTs), and of mRNAs with processing defects, thereby limiting or excluding their export to the cytoplasm. In the cytoplasm, the RNA exosome complex is involved in general mRNA turnover and in RNA surveillance pathways, preventing translation of aberrant mRNAs. The catalytic inactive RNA exosome core complex of 9 subunits (Exo-9) is proposed to play a pivotal role in the binding and presentation of RNA for ribonucleolysis, and to serve as a scaffold for the association with catalytic subunits and accessory proteins or complexes. RRP42 is part of the hexameric ring of RNase PH domain-containing subunits proposed to form a central channel which threads RNA substrates for degradation. This is Exosome complex component RRP42 (RRP42) from Saccharomyces cerevisiae (strain ATCC 204508 / S288c) (Baker's yeast).